The chain runs to 203 residues: Orotate phosphoribosyltransferase (203 aa).

5-phospho-alpha-D-ribose 1-diphosphate is bound by residues Arg-94, Lys-98, His-100, and 120–128 (EDLISTGGS). Ser-124 is a binding site for orotate.

The protein belongs to the purine/pyrimidine phosphoribosyltransferase family. PyrE subfamily. In terms of assembly, homodimer. The cofactor is Mg(2+).

The enzyme catalyses orotidine 5'-phosphate + diphosphate = orotate + 5-phospho-alpha-D-ribose 1-diphosphate. The protein operates within pyrimidine metabolism; UMP biosynthesis via de novo pathway; UMP from orotate: step 1/2. Catalyzes the transfer of a ribosyl phosphate group from 5-phosphoribose 1-diphosphate to orotate, leading to the formation of orotidine monophosphate (OMP). This Staphylococcus aureus (strain MSSA476) protein is Orotate phosphoribosyltransferase.